Consider the following 561-residue polypeptide: Glucose-6-phosphate isomerase (561 aa).

Residues 171 to 172 (GS), 222 to 227 (SKTFTT), glutamine 366, glutamate 370, histidine 401, and lysine 525 each bind D-glucose 6-phosphate. The Proton donor role is filled by glutamate 370. Residues histidine 401 and lysine 525 contribute to the active site.

This sequence belongs to the GPI family. Homodimer.

The protein localises to the cytoplasm. It localises to the cytosol. It catalyses the reaction alpha-D-glucose 6-phosphate = beta-D-fructose 6-phosphate. Its pathway is carbohydrate degradation; glycolysis; D-glyceraldehyde 3-phosphate and glycerone phosphate from D-glucose: step 2/4. In the cytoplasm, catalyzes the conversion of glucose-6-phosphate to fructose-6-phosphate, the second step in glycolysis, and the reverse reaction during gluconeogenesis. The polypeptide is Glucose-6-phosphate isomerase (pgi-1) (Neurospora crassa (strain ATCC 24698 / 74-OR23-1A / CBS 708.71 / DSM 1257 / FGSC 987)).